We begin with the raw amino-acid sequence, 325 residues long: Phospholipid phosphatase-related protein type 1 (325 aa).

A glycan (N-linked (GlcNAc...) asparagine) is linked at Asn-5. Transmembrane regions (helical) follow at residues 13–33, 67–87, and 127–147; these read IIPC…LLAY, FISP…IIFI, and FIGV…AGQV. Asn-163 carries an N-linked (GlcNAc...) asparagine glycan. 3 consecutive transmembrane segments (helical) span residues 201-219, 226-244, and 257-277; these read AALS…TSTI, LAKP…LTGL, and VIAG…CVVH. Ser-307 bears the Phosphoserine mark. Asn-316 carries an N-linked (GlcNAc...) asparagine glycan.

This sequence belongs to the PA-phosphatase related phosphoesterase family. As to expression, highly expressed in the brain. Also found in the liver, kidney and testis. In the brain shows a strongest expression in the hippocampus and cerebellum.

It is found in the cell membrane. It localises to the cell projection. The protein resides in the neuron projection. In terms of biological role, may play a role in neurite outgrowth and neurogenesis. The polypeptide is Phospholipid phosphatase-related protein type 1 (Rattus norvegicus (Rat)).